Reading from the N-terminus, the 983-residue chain is Pro-apoptotic serine protease NMA111 (983 aa).

The segment at 1–40 is disordered; the sequence is MSVPTKRRLSFDESTNKRFLNGTHSTENNTSNIEVDEDYG. Over residues 22 to 33 the composition is skewed to polar residues; sequence GTHSTENNTSNI. A serine protease region spans residues 59–260; the sequence is WQETITKVVN…LPIYRPLRAL (202 aa). Catalysis depends on charge relay system residues histidine 108, aspartate 139, and serine 222. PDZ domains lie at 287 to 365 and 867 to 948; these read RRLG…QRGG and FWSG…MSFD.

Belongs to the peptidase S1C family.

It is found in the nucleus. Nuclear serine protease which mediates apoptosis. This is Pro-apoptotic serine protease NMA111 (NMA111) from Scheffersomyces stipitis (strain ATCC 58785 / CBS 6054 / NBRC 10063 / NRRL Y-11545) (Yeast).